A 231-amino-acid polypeptide reads, in one-letter code: Elongation factor 1-delta (231 aa).

A disordered region spans residues 75–136 (SGVTVEGNAP…AAAAAAKPAK (62 aa)). Residues 101 to 117 (ADDDDDDDVDLFGEETE) show a composition bias toward acidic residues. A compositionally biased stretch (basic and acidic residues) spans 118-127 (EEKKAAEERA).

The protein belongs to the EF-1-beta/EF-1-delta family. EF-1 is composed of 4 subunits: alpha, beta (1B-alpha=beta'), delta (1B-beta), and gamma (1B-gamma).

Functionally, EF-1-beta and EF-1-beta' stimulate the exchange of GDP bound to EF-1-alpha to GTP. The sequence is that of Elongation factor 1-delta from Beta vulgaris (Sugar beet).